Reading from the N-terminus, the 255-residue chain is tRNA (guanine-N(1)-)-methyltransferase (255 aa).

S-adenosyl-L-methionine is bound by residues Gly-113 and 133-138 (IGDYVL).

This sequence belongs to the RNA methyltransferase TrmD family. In terms of assembly, homodimer.

The protein resides in the cytoplasm. The enzyme catalyses guanosine(37) in tRNA + S-adenosyl-L-methionine = N(1)-methylguanosine(37) in tRNA + S-adenosyl-L-homocysteine + H(+). Its function is as follows. Specifically methylates guanosine-37 in various tRNAs. This is tRNA (guanine-N(1)-)-methyltransferase from Shigella flexneri serotype 5b (strain 8401).